Here is a 532-residue protein sequence, read N- to C-terminus: NMDA receptor synaptonuclear signaling and neuronal migration factor (532 aa).

The N-myristoyl glycine moiety is linked to residue Gly2. The tract at residues 2-235 (GAAASRRRAL…FSFQTATTTM (234 aa)) is necessary and sufficient to elicit dendritic processes and synaptic contacts. Disordered stretches follow at residues 34 to 67 (SQSHPENRNGADHLLADAYSGHEGSPEMQPAPHN) and 127 to 174 (RRQR…GCAK). Residues 38-48 (PENRNGADHLL) are compositionally biased toward basic and acidic residues. Basic residues predominate over residues 127–139 (RRQRERHPHHHSQ). Over residues 155–164 (PCQSWAGSRQ) the composition is skewed to polar residues. Ser206 is subject to Phosphoserine. Positions 247–252 (RKRRKR) match the Nuclear localization signal motif. The segment at 275 to 315 (RVKAQTFAERRERSFSRSWSDPTPMKADTSHDSRDSSDLQS) is disordered. A phosphoserine mark is found at Ser292 and Ser294. The segment covering 302–311 (DTSHDSRDSS) has biased composition (basic and acidic residues).

It belongs to the NSMF family. As to quaternary structure, interacts with KPNA1; the interaction occurs in a calcium-independent manner after synaptic NMDA receptor stimulation and is required for nuclear import of NSMF but is competed by CABP1. Interacts (via the central NLS-containing motif region) with CABP1 (via EF-hands 1 and 2); the interaction occurs in a calcium-dependent manner after synaptic NMDA receptor stimulation and prevents the nuclear import of NSMF. Cannot be competed by calmodulin. In terms of processing, proteolytically processed after NMDA receptor activation. Cleaved in a calcium-dependent and calpain-sensitive manner. Calpain cleavage is essential for the translocation process from dendrites to the nucleus. In terms of tissue distribution, expressed in the radiatum and pyramidale strata of the hippocampus (at protein level). Strongly expressed in the brain. Expressed in the sensory and motor cortex, hippocampus, olfactory bulb, thalamus and amygdala. In the olfactory bulb expressed in the granular cell layer, mitral cell layer and the glomerular layer. In the hippocampus highly expressed in the regions associated with neuronal cell types as CA1, CA2, CA3 and granule cells of the dentate gyrus. All isoforms have been detected in the molecular layers of the hippocampus.

The protein resides in the nucleus. It localises to the nucleus envelope. Its subcellular location is the nucleus membrane. It is found in the nucleus matrix. The protein localises to the cytoplasm. The protein resides in the cell cortex. It localises to the cytoskeleton. Its subcellular location is the cell membrane. It is found in the cell projection. The protein localises to the dendrite. The protein resides in the synapse. It localises to the synaptosome. Its subcellular location is the postsynaptic density. It is found in the membrane. In terms of biological role, couples NMDA-sensitive glutamate receptor signaling to the nucleus and triggers long-lasting changes in the cytoarchitecture of dendrites and spine synapse processes. Part of the cAMP response element-binding protein (CREB) shut-off signaling pathway. Stimulates outgrowth of olfactory axons and migration of gonadotropin-releasing hormone (GnRH) and luteinizing-hormone-releasing hormone (LHRH) neuronal cells. This chain is NMDA receptor synaptonuclear signaling and neuronal migration factor (Nsmf), found in Rattus norvegicus (Rat).